A 221-amino-acid chain; its full sequence is MSTEPNSPFVDDPLSAVDARILGSLVEKQATTPETYPLTLNALVLACNQKTSRDPVMNLTPGQVGQSLRQLEGRGLVRLVMGSRADRWEHTLGKGLELVAPQVALLGLLFLRGPQTLNELLTRSNRLHDFDDVEQIRHHLERLAGRGLAVHLERRAGQREERYMHLLGSQADLEAAVEAMGSDPERAAPAALSADAEARIAELETRLAALEERLARLEGGA.

Belongs to the UPF0502 family.

This chain is UPF0502 protein PLES_16071, found in Pseudomonas aeruginosa (strain LESB58).